Here is a 376-residue protein sequence, read N- to C-terminus: Phosphoserine aminotransferase (376 aa).

Arg-42 contacts L-glutamate. 4 residues coordinate pyridoxal 5'-phosphate: Trp-104, Thr-163, Asp-188, and Gln-211. Lys-212 carries the N6-(pyridoxal phosphate)lysine modification. 253-254 (NT) is a pyridoxal 5'-phosphate binding site.

The protein belongs to the class-V pyridoxal-phosphate-dependent aminotransferase family. SerC subfamily. In terms of assembly, homodimer. Pyridoxal 5'-phosphate serves as cofactor.

It localises to the cytoplasm. The enzyme catalyses O-phospho-L-serine + 2-oxoglutarate = 3-phosphooxypyruvate + L-glutamate. It carries out the reaction 4-(phosphooxy)-L-threonine + 2-oxoglutarate = (R)-3-hydroxy-2-oxo-4-phosphooxybutanoate + L-glutamate. It functions in the pathway amino-acid biosynthesis; L-serine biosynthesis; L-serine from 3-phospho-D-glycerate: step 2/3. It participates in cofactor biosynthesis; pyridoxine 5'-phosphate biosynthesis; pyridoxine 5'-phosphate from D-erythrose 4-phosphate: step 3/5. In terms of biological role, catalyzes the reversible conversion of 3-phosphohydroxypyruvate to phosphoserine and of 3-hydroxy-2-oxo-4-phosphonooxybutanoate to phosphohydroxythreonine. The polypeptide is Phosphoserine aminotransferase (Bordetella avium (strain 197N)).